Reading from the N-terminus, the 269-residue chain is 4-hydroxy-tetrahydrodipicolinate reductase (269 aa).

NAD(+) is bound by residues G8–M13 and E34. An NADP(+)-binding site is contributed by R35. Residues G98–T100 and A122–Y125 contribute to the NAD(+) site. H155 functions as the Proton donor/acceptor in the catalytic mechanism. H156 lines the (S)-2,3,4,5-tetrahydrodipicolinate pocket. K159 (proton donor) is an active-site residue. G165–T166 is a (S)-2,3,4,5-tetrahydrodipicolinate binding site.

Belongs to the DapB family.

It is found in the cytoplasm. The catalysed reaction is (S)-2,3,4,5-tetrahydrodipicolinate + NAD(+) + H2O = (2S,4S)-4-hydroxy-2,3,4,5-tetrahydrodipicolinate + NADH + H(+). It catalyses the reaction (S)-2,3,4,5-tetrahydrodipicolinate + NADP(+) + H2O = (2S,4S)-4-hydroxy-2,3,4,5-tetrahydrodipicolinate + NADPH + H(+). The protein operates within amino-acid biosynthesis; L-lysine biosynthesis via DAP pathway; (S)-tetrahydrodipicolinate from L-aspartate: step 4/4. In terms of biological role, catalyzes the conversion of 4-hydroxy-tetrahydrodipicolinate (HTPA) to tetrahydrodipicolinate. This Vibrio parahaemolyticus serotype O3:K6 (strain RIMD 2210633) protein is 4-hydroxy-tetrahydrodipicolinate reductase.